Here is a 419-residue protein sequence, read N- to C-terminus: Phospho-N-acetylmuramoyl-pentapeptide-transferase (419 aa).

The next 10 membrane-spanning stretches (helical) occupy residues 22–42, 72–92, 94–114, 135–155, 210–230, 238–258, 266–286, 303–323, 327–347, and 396–416; these read YVSFRSGLALILSLFISTAIG, TPTMGGIIIIIAILIPTLLCA, LNNIYVILMLVTTVWLGALGF, IVGQVGLGLIVGLVLFMSPDV, AAWLVFVLMVIFVVTAVSNGA, GLAAGTSAIIGVALGILAYMS, FLNIMFIPGAEELVVYAAAFI, FMGDTGSLTLGGIIAVFAIII, LLIPILCGIFLVENISVMLQV, and KIVVRFWLIGIILAVMTIVTL.

Belongs to the glycosyltransferase 4 family. MraY subfamily. Mg(2+) is required as a cofactor.

The protein localises to the cell inner membrane. The catalysed reaction is UDP-N-acetyl-alpha-D-muramoyl-L-alanyl-gamma-D-glutamyl-meso-2,6-diaminopimeloyl-D-alanyl-D-alanine + di-trans,octa-cis-undecaprenyl phosphate = di-trans,octa-cis-undecaprenyl diphospho-N-acetyl-alpha-D-muramoyl-L-alanyl-D-glutamyl-meso-2,6-diaminopimeloyl-D-alanyl-D-alanine + UMP. Its pathway is cell wall biogenesis; peptidoglycan biosynthesis. Functionally, catalyzes the initial step of the lipid cycle reactions in the biosynthesis of the cell wall peptidoglycan: transfers peptidoglycan precursor phospho-MurNAc-pentapeptide from UDP-MurNAc-pentapeptide onto the lipid carrier undecaprenyl phosphate, yielding undecaprenyl-pyrophosphoryl-MurNAc-pentapeptide, known as lipid I. This is Phospho-N-acetylmuramoyl-pentapeptide-transferase from Parabacteroides distasonis (strain ATCC 8503 / DSM 20701 / CIP 104284 / JCM 5825 / NCTC 11152).